A 580-amino-acid polypeptide reads, in one-letter code: UPF0329 protein ECU06_0080 (580 aa).

Over residues 308-330 (RQKRREREMEKSMKELLRDEEKA) the composition is skewed to basic and acidic residues. The interval 308–384 (RQKRREREME…KTGKKSKGGR (77 aa)) is disordered. Residues 331-340 (KSKKGRKKKS) are compositionally biased toward basic residues. Over residues 351-363 (SETEEVEASEEME) the composition is skewed to acidic residues. The segment covering 372-384 (ARRKTGKKSKGGR) has biased composition (basic residues).

It belongs to the UPF0329 family.

The chain is UPF0329 protein ECU06_0080 from Encephalitozoon cuniculi (strain GB-M1) (Microsporidian parasite).